A 134-amino-acid polypeptide reads, in one-letter code: uncharacterized protein (134 aa).

A helical membrane pass occupies residues 110–130 (SLGVLTDILFLVLYSLLIHLS).

Its subcellular location is the membrane. This is an uncharacterized protein from Saccharomyces cerevisiae (strain ATCC 204508 / S288c) (Baker's yeast).